The primary structure comprises 605 residues: Probable potassium transport system protein Kup 2 (605 aa).

12 consecutive transmembrane segments (helical) span residues 17 to 37 (GLVF…IMTL), 45 to 65 (VLGI…VEYA), 96 to 116 (MAFA…DGVI), 139 to 159 (AQGG…IFQF), 169 to 189 (FGPI…VSII), 211 to 231 (GLAG…GEAL), 246 to 266 (AWYF…AFIL), 286 to 306 (LYIP…QALI), 338 to 358 (IYIG…MILF), 367 to 387 (AYGL…TMIF), 394 to 414 (WKVP…TANL), and 417 to 437 (LPHG…IMVI).

Belongs to the HAK/KUP transporter (TC 2.A.72) family.

Its subcellular location is the cell inner membrane. The enzyme catalyses K(+)(in) + H(+)(in) = K(+)(out) + H(+)(out). Its function is as follows. Transport of potassium into the cell. Likely operates as a K(+):H(+) symporter. The polypeptide is Probable potassium transport system protein Kup 2 (Geobacter sulfurreducens (strain ATCC 51573 / DSM 12127 / PCA)).